The primary structure comprises 285 residues: Elongation factor Ts (285 aa).

The segment at 82–85 (TDFV) is involved in Mg(2+) ion dislocation from EF-Tu.

It belongs to the EF-Ts family.

Its subcellular location is the cytoplasm. Associates with the EF-Tu.GDP complex and induces the exchange of GDP to GTP. It remains bound to the aminoacyl-tRNA.EF-Tu.GTP complex up to the GTP hydrolysis stage on the ribosome. The sequence is that of Elongation factor Ts from Sodalis glossinidius (strain morsitans).